The sequence spans 322 residues: Corticotropin-releasing factor-binding protein (322 aa).

A signal peptide spans 1 to 24; sequence MSPNFKLQCHFTLILLTALRGESR. Intrachain disulfides connect Cys60-Cys81, Cys104-Cys141, Cys183-Cys205, Cys237-Cys264, and Cys277-Cys318. N-linked (GlcNAc...) asparagine glycosylation is present at Asn204.

Belongs to the CRF-binding protein family.

The protein resides in the secreted. Functionally, binds CRF and inactivates it. May prevent inappropriate pituitary-adrenal stimulation in pregnancy. This is Corticotropin-releasing factor-binding protein (Crhbp) from Rattus norvegicus (Rat).